The chain runs to 425 residues: Kynureninase (425 aa).

Residues Leu-105, Thr-106, 133 to 136, Asp-218, His-221, and Tyr-243 each bind pyridoxal 5'-phosphate; that span reads FPSD. Lys-244 carries the N6-(pyridoxal phosphate)lysine modification. Residues Trp-274 and Asn-302 each coordinate pyridoxal 5'-phosphate.

The protein belongs to the kynureninase family. Homodimer. The cofactor is pyridoxal 5'-phosphate.

It catalyses the reaction L-kynurenine + H2O = anthranilate + L-alanine + H(+). The enzyme catalyses 3-hydroxy-L-kynurenine + H2O = 3-hydroxyanthranilate + L-alanine + H(+). The protein operates within amino-acid degradation; L-kynurenine degradation; L-alanine and anthranilate from L-kynurenine: step 1/1. Its pathway is cofactor biosynthesis; NAD(+) biosynthesis; quinolinate from L-kynurenine: step 2/3. Catalyzes the cleavage of L-kynurenine (L-Kyn) and L-3-hydroxykynurenine (L-3OHKyn) into anthranilic acid (AA) and 3-hydroxyanthranilic acid (3-OHAA), respectively. The sequence is that of Kynureninase from Christiangramia forsetii (strain DSM 17595 / CGMCC 1.15422 / KT0803) (Gramella forsetii).